A 242-amino-acid polypeptide reads, in one-letter code: Megakaryocyte and platelet inhibitory receptor G6b (242 aa).

The N-terminal stretch at 1–17 (MALVLPLLPLLLSKVQG) is a signal peptide. 2 N-linked (GlcNAc...) asparagine glycosylation sites follow: Asn-32 and Asn-112. A helical membrane pass occupies residues 141 to 161 (VLIPLLGVGLVLGLGVAGVVW). 2 consecutive short sequence motifs (ITIM motif) follow at residues 210–215 (LHYADL) and 236–241 (TVYAVV). A Phosphotyrosine modification is found at Tyr-212.

Interacts (via ITIM motif) with PTPN6 and PTPN11. Binds to heparin. In terms of processing, N-glycosylated. May be O-glycosylated. Post-translationally, phosphorylated. As to expression, expressed in mature megakaryocytes and platelets. Not expressed by immature megakaryocytes.

It is found in the cell membrane. Functionally, inhibitory receptor that acts as a critical regulator of hematopoietic lineage differentiation, megakaryocyte function and platelet production. Inhibits platelet aggregation and activation by agonists such as ADP and collagen-related peptide. This regulation of megakaryocate function as well as platelet production ann activation is done through the inhibition (via the 2 ITIM motifs) of the receptors CLEC1B and GP6:FcRgamma signaling. Appears to operate in a calcium-independent manner. The chain is Megakaryocyte and platelet inhibitory receptor G6b from Mus musculus (Mouse).